The primary structure comprises 318 residues: Coproporphyrin III ferrochelatase (318 aa).

The Fe(2+) site is built by His186 and Glu268.

This sequence belongs to the ferrochelatase family.

It localises to the cytoplasm. The enzyme catalyses Fe-coproporphyrin III + 2 H(+) = coproporphyrin III + Fe(2+). The protein operates within porphyrin-containing compound metabolism; protoheme biosynthesis. Functionally, involved in coproporphyrin-dependent heme b biosynthesis. Catalyzes the insertion of ferrous iron into coproporphyrin III to form Fe-coproporphyrin III. This is Coproporphyrin III ferrochelatase from Lactococcus lactis subsp. cremoris (strain SK11).